A 183-amino-acid chain; its full sequence is Beta-defensin 129 (183 aa).

The N-terminal stretch at 1–19 is a signal peptide; that stretch reads MKLLFPIFASLMLQYQVNT. Cystine bridges form between C27-C53, C34-C48, and C38-C54. Residues 142–183 form a disordered region; sequence ATSAKSNTKESGDSATASPPPAPPPPNILPTPSLELEEAEEQ. Pro residues predominate over residues 159-170; that stretch reads SPPPAPPPPNIL.

The protein belongs to the beta-defensin family.

It is found in the secreted. Its function is as follows. Has antibacterial activity. The chain is Beta-defensin 129 (DEFB129) from Macaca fascicularis (Crab-eating macaque).